The sequence spans 337 residues: MEEEKLTSEKEIYDITVIGGGPVGLFTAFYAGLRGISVKVIESLSELGGQPAILYPEKVIYDIPAFPAITGADLVDNLIEQLERFKDKTTICLKEEVKTFEKENAIFTITTNKGNHFSKAIIIACGNGAFAPRRLGLDDEERYADHNLFYNVHKLDQFAGKKVVICGGGDSAVDWANALDKIAESVTLVHRRDAFRAHEHSVEVLKTSHVNIMTPYVPLELKGEGDEATSLVIQKVKSEETKELSLDSLIVSFGFSTSNKNLKSWNIDYKRSSINVSPLFETSQTGVFAIGDAAEYEGKIDLIATGFGEAPTAVNQAIKYIYPERDNRVVHSTSLIK.

Positions 42, 50, 55, 97, 130, 292, and 333 each coordinate FAD.

The protein belongs to the ferredoxin--NADP reductase type 2 family. Homodimer. The cofactor is FAD.

It carries out the reaction 2 reduced [2Fe-2S]-[ferredoxin] + NADP(+) + H(+) = 2 oxidized [2Fe-2S]-[ferredoxin] + NADPH. The sequence is that of Ferredoxin--NADP reductase from Streptococcus mutans serotype c (strain ATCC 700610 / UA159).